Here is a 307-residue protein sequence, read N- to C-terminus: Ribonuclease Z (307 aa).

Zn(2+) is bound by residues His-63, His-65, Asp-67, His-68, His-140, Asp-211, and His-269. Asp-67 acts as the Proton acceptor in catalysis.

The protein belongs to the RNase Z family. As to quaternary structure, homodimer. The cofactor is Zn(2+).

It carries out the reaction Endonucleolytic cleavage of RNA, removing extra 3' nucleotides from tRNA precursor, generating 3' termini of tRNAs. A 3'-hydroxy group is left at the tRNA terminus and a 5'-phosphoryl group is left at the trailer molecule.. In terms of biological role, zinc phosphodiesterase, which displays some tRNA 3'-processing endonuclease activity. Probably involved in tRNA maturation, by removing a 3'-trailer from precursor tRNA. In Bacillus licheniformis (strain ATCC 14580 / DSM 13 / JCM 2505 / CCUG 7422 / NBRC 12200 / NCIMB 9375 / NCTC 10341 / NRRL NRS-1264 / Gibson 46), this protein is Ribonuclease Z.